The primary structure comprises 154 residues: 3-hydroxyacyl-[acyl-carrier-protein] dehydratase FabZ (154 aa).

The active site involves His54.

Belongs to the thioester dehydratase family. FabZ subfamily.

Its subcellular location is the cytoplasm. It catalyses the reaction a (3R)-hydroxyacyl-[ACP] = a (2E)-enoyl-[ACP] + H2O. In terms of biological role, involved in unsaturated fatty acids biosynthesis. Catalyzes the dehydration of short chain beta-hydroxyacyl-ACPs and long chain saturated and unsaturated beta-hydroxyacyl-ACPs. The sequence is that of 3-hydroxyacyl-[acyl-carrier-protein] dehydratase FabZ from Chlamydia caviae (strain ATCC VR-813 / DSM 19441 / 03DC25 / GPIC) (Chlamydophila caviae).